The primary structure comprises 485 residues: MTHWIAGEWVQGQGEAFTSLSPYNQEVIWQGNGATAEQVNQAVSAAREAFVDWKKRPFAEREAIVLAFAEKVKENSEKIAEVIAKETGKPIWETRTEAAAMAGKIAISIRAYHDRTGEATREAAGNQIVLRHRPLGVMAVFGPYNFPGHLPNGHIVPALLAGNTVVFKPSEQTPWTGELAMKLWEEVGLPKGVINLVQGAKETGIALADAKGIDGVLFTGSANTGHVLHRQFAGQPGKMLALEMGGNNPMVISDNYGDLDATVYTIIQSAFISAGQRCTCARRLYIPFGDKGDAVITKLVEATRNIRVDRPFAEPAPFMGPQISVAAAKFILDAQANLQSLGGESLIEAKAGEAAFVSPGIIDVTNIAELPDEEYFGPLLQVVRYEGLEKAVELANDTRFGLSAGLVSTDDQEWEYFVDHIRAGIVNRNRQLTGASGDAPFGGPGASGNLRPSAYYAADYCAYPMASMEGQETVLPATLSPGVSL.

Position 220–225 (220–225) interacts with NAD(+); that stretch reads GSANTG. Residues glutamate 243 and cysteine 278 contribute to the active site.

The protein belongs to the aldehyde dehydrogenase family. AstD subfamily.

The catalysed reaction is N-succinyl-L-glutamate 5-semialdehyde + NAD(+) + H2O = N-succinyl-L-glutamate + NADH + 2 H(+). It functions in the pathway amino-acid degradation; L-arginine degradation via AST pathway; L-glutamate and succinate from L-arginine: step 4/5. In terms of biological role, catalyzes the NAD-dependent reduction of succinylglutamate semialdehyde into succinylglutamate. This chain is N-succinylglutamate 5-semialdehyde dehydrogenase, found in Vibrio campbellii (strain ATCC BAA-1116).